An 89-amino-acid polypeptide reads, in one-letter code: DNA/RNA-binding protein Alba 2 (89 aa).

It belongs to the histone-like Alba family. In terms of assembly, forms homodimers and homotetramers. Interacts with Alba 1.

The protein localises to the cytoplasm. It localises to the chromosome. Its function is as follows. Binds double-stranded DNA tightly but without sequence specificity. Involved in DNA compaction. The protein is DNA/RNA-binding protein Alba 2 of Archaeoglobus fulgidus (strain ATCC 49558 / DSM 4304 / JCM 9628 / NBRC 100126 / VC-16).